Consider the following 195-residue polypeptide: Molybdenum cofactor guanylyltransferase (195 aa).

GTP-binding positions include 10–12 (LAG), K23, N51, D69, and D99. Mg(2+) is bound at residue D99.

Belongs to the MobA family. In terms of assembly, monomer. Mg(2+) serves as cofactor.

It localises to the cytoplasm. The catalysed reaction is Mo-molybdopterin + GTP + H(+) = Mo-molybdopterin guanine dinucleotide + diphosphate. Its function is as follows. Transfers a GMP moiety from GTP to Mo-molybdopterin (Mo-MPT) cofactor (Moco or molybdenum cofactor) to form Mo-molybdopterin guanine dinucleotide (Mo-MGD) cofactor. This Histophilus somni (strain 2336) (Haemophilus somnus) protein is Molybdenum cofactor guanylyltransferase.